The primary structure comprises 256 residues: Imidazole glycerol phosphate synthase subunit HisF (256 aa).

Catalysis depends on residues aspartate 12 and aspartate 131.

The protein belongs to the HisA/HisF family. Heterodimer of HisH and HisF.

It is found in the cytoplasm. The enzyme catalyses 5-[(5-phospho-1-deoxy-D-ribulos-1-ylimino)methylamino]-1-(5-phospho-beta-D-ribosyl)imidazole-4-carboxamide + L-glutamine = D-erythro-1-(imidazol-4-yl)glycerol 3-phosphate + 5-amino-1-(5-phospho-beta-D-ribosyl)imidazole-4-carboxamide + L-glutamate + H(+). It functions in the pathway amino-acid biosynthesis; L-histidine biosynthesis; L-histidine from 5-phospho-alpha-D-ribose 1-diphosphate: step 5/9. In terms of biological role, IGPS catalyzes the conversion of PRFAR and glutamine to IGP, AICAR and glutamate. The HisF subunit catalyzes the cyclization activity that produces IGP and AICAR from PRFAR using the ammonia provided by the HisH subunit. The sequence is that of Imidazole glycerol phosphate synthase subunit HisF from Bifidobacterium longum (strain DJO10A).